The primary structure comprises 308 residues: Secreted frizzled-related protein 1 (308 aa).

The N-terminal stretch at 1–25 is a signal peptide; it reads MGGGRWAAAGALLALAAGLLAAGSA. The region spanning 47-163 is the FZ domain; the sequence is TKPPQCVDIP…FPEGDVCIAM (117 aa). 5 disulfide bridges follow: Cys52/Cys115, Cys62/Cys108, Cys99/Cys134, Cys123/Cys160, and Cys127/Cys151. Asn167 is a glycosylation site (N-linked (GlcNAc...) asparagine). Disulfide bonds link Cys180–Cys250, Cys183–Cys252, and Cys197–Cys300. One can recognise an NTR domain in the interval 180–300; that stretch reads CPPCDNELKS…FMKKMKNHEC (121 aa).

The protein belongs to the secreted frizzled-related protein (sFRP) family. Interacts with WNT1, WNT2, WNT4, WNT8, MYOC and FRZD6. Highest levels in aortic endothelium, heart, spleen and eye. Lower levels in lung, brain and kidney. Weak expression in liver, skeletal muscle and the medial layer of the aorta. In the cortical brain, localized to neurons and small blood vessels. In the retina, localized to the inner and outer nuclear layers with high expression in the neuronal cell bodies. In the heart, restricted to myocytes. In lung, highest expression found in the epithelium of terminal bronchioles. In kidney, localized to the epithelium of collecting ducts of the medulla and, in spleen, expression restricted to the red pulp in cells associated with the sinuses.

Its subcellular location is the secreted. Its function is as follows. Soluble frizzled-related proteins (sFRPS) function as modulators of Wnt signaling through direct interaction with Wnts. They have a role in regulating cell growth and differentiation in specific cell types. SFRP1 decreases intracellular beta-catenin levels. Has antiproliferative effects on vascular cells, in vitro and in vivo, and can induce, in vivo, an angiogenic response. In vascular cell cycle, delays the G1 phase and entry into the S phase. In kidney development, inhibits tubule formation and bud growth in metanephroi. Inhibits WNT1/WNT4-mediated TCF-dependent transcription. The chain is Secreted frizzled-related protein 1 (SFRP1) from Bos taurus (Bovine).